A 290-amino-acid polypeptide reads, in one-letter code: MVLLHVKRGDESQFLLQAPGSTELEELTVQVARVYNGRLKVQRLCSEMEELAEHGIFLPPNMQGLTDDQIEELKLKDEWGEKCVPSGGAVFKKDDIGRRNGQAPNEKMKQVLKKTIEEAKAIISKKQVEAGVCVTMEMVKDALDQLRGAVMIVYPMGLPPYDPIRMEFENKEDLSGTQAGLNVIKEAEAQLWWAAKELRRTKKLSDYVGKNEKTKIIAKIQQRGQGAPAREPIISSEEQKQLMLYYHRRQEELKRLEENDDDAYLNSPWADNTALKRHFHGVKDIKWRPR.

Tyr-264 bears the Phosphotyrosine mark.

It belongs to the CFAP298 family. Interacts with ZMYND10.

It is found in the cytoplasm. The protein resides in the cytoskeleton. It localises to the cilium basal body. Plays a role in motile cilium function, possibly by acting on outer dynein arm assembly. Seems to be important for initiation rather than maintenance of cilium motility. Required for correct positioning of the cilium at the apical cell surface, suggesting an additional role in the planar cell polarity (PCP) pathway. May suppress canonical Wnt signaling activity. The sequence is that of Cilia- and flagella-associated protein 298 from Homo sapiens (Human).